The primary structure comprises 317 residues: Aquaporin-2 (317 aa).

Residues 1 to 75 (MSLRDDLTIN…RSQEFKMQHR (75 aa)) lie on the Cytoplasmic side of the membrane. Residues 76-96 (EFLAEFIGTLILVLLTCGFCA) traverse the membrane as a helical segment. The Extracellular segment spans residues 97–108 (EQTLNIEKSKSW). A helical transmembrane segment spans residues 109-129 (LTSSLGSGLSVLIGICVAGHV). Residues 130–154 (SGGHLNPAITIAFWVFSGFPIRKVP) lie on the Cytoplasmic side of the membrane. An NPA 1 motif is present at residues 135–137 (NPA). A helical transmembrane segment spans residues 155–175 (MYITAQLLGAFSGAALLYSIV). Topologically, residues 176–208 (EPAISQFDHGKRQILGELGTAGIFGTYPPLYVG) are extracellular. Residues 209-229 (TGSAVASEVVGTAMLLLVVMV) traverse the membrane as a helical segment. Residues 230–242 (TGHPNNLPFRTAQ) lie on the Cytoplasmic side of the membrane. A helical transmembrane segment spans residues 243 to 263 (GAMIALGVTTISLCIGYTSGF). Topologically, residues 264-295 (SLNPARDFGPRLFTAVAGWGIDVFTVHHYYAL) are extracellular. The short motif at 266-268 (NPA) is the NPA 2 element. The chain crosses the membrane as a helical span at residues 296–316 (VPMFAPILGGLAGGFIYTVFI). Asp-317 is a topological domain (cytoplasmic).

The protein belongs to the MIP/aquaporin (TC 1.A.8) family.

It is found in the cell membrane. The enzyme catalyses H2O(in) = H2O(out). The catalysed reaction is glycerol(in) = glycerol(out). In terms of biological role, water channel required to facilitate the transport of water across membranes. Contributes to water uptake of spores during the early stages of spore germination. Aquaporins AQP1 and AQP2 act as extracellular pH sensors and enable the spores to hydrate under favorable conditions and to commence germination. Wounded vegetables and fruit present acidic pH, so the optimal pH range for germination is adapted to the relevant host pH. The protein is Aquaporin-2 of Rhizopus delemar (strain RA 99-880 / ATCC MYA-4621 / FGSC 9543 / NRRL 43880) (Mucormycosis agent).